Reading from the N-terminus, the 605-residue chain is DNA mismatch repair protein MutL (605 aa).

The protein belongs to the DNA mismatch repair MutL/HexB family.

Its function is as follows. This protein is involved in the repair of mismatches in DNA. It is required for dam-dependent methyl-directed DNA mismatch repair. May act as a 'molecular matchmaker', a protein that promotes the formation of a stable complex between two or more DNA-binding proteins in an ATP-dependent manner without itself being part of a final effector complex. This is DNA mismatch repair protein MutL from Exiguobacterium sp. (strain ATCC BAA-1283 / AT1b).